The primary structure comprises 405 residues: Mevalonate 3,5-bisphosphate decarboxylase (405 aa).

The protein belongs to the mevalonate 3,5-bisphosphate decarboxylase family. In terms of assembly, homodimer.

It carries out the reaction (R)-3,5-bisphosphomevalonate + H(+) = isopentenyl phosphate + phosphate + CO2. It participates in isoprenoid biosynthesis; isopentenyl diphosphate biosynthesis via mevalonate pathway. Functionally, catalyzes the ATP-independent decarboxylation of (R)-mevalonate 3,5-bisphosphate to isopentenyl phosphate. Functions in an alternative mevalonate pathway, only present in extreme acidophiles of the Thermoplasmatales order, which passes through mevalonate 3-phosphate rather than mevalonate 5-phosphate. This Thermoplasma acidophilum (strain ATCC 25905 / DSM 1728 / JCM 9062 / NBRC 15155 / AMRC-C165) protein is Mevalonate 3,5-bisphosphate decarboxylase.